Here is a 327-residue protein sequence, read N- to C-terminus: Pyruvate dehydrogenase E1 component subunit beta (327 aa).

Glutamate 63 is a thiamine diphosphate binding site.

Heterodimer of an alpha and a beta chain. The cofactor is thiamine diphosphate.

It carries out the reaction N(6)-[(R)-lipoyl]-L-lysyl-[protein] + pyruvate + H(+) = N(6)-[(R)-S(8)-acetyldihydrolipoyl]-L-lysyl-[protein] + CO2. In terms of biological role, the pyruvate dehydrogenase complex catalyzes the overall conversion of pyruvate to acetyl-CoA and CO(2). It contains multiple copies of three enzymatic components: pyruvate dehydrogenase (E1), dihydrolipoamide acetyltransferase (E2) and lipoamide dehydrogenase (E3). The polypeptide is Pyruvate dehydrogenase E1 component subunit beta (pdhB) (Mycoplasma pneumoniae (strain ATCC 29342 / M129 / Subtype 1) (Mycoplasmoides pneumoniae)).